We begin with the raw amino-acid sequence, 379 residues long: Retron Se72 reverse transcriptase (379 aa).

A Reverse transcriptase domain is found at 1-245; sequence MNKPRFNGTP…SKLSVTGLWV (245 aa). D109, D188, and D189 together coordinate Mg(2+).

The protein belongs to the bacterial reverse transcriptase family.

It carries out the reaction DNA(n) + a 2'-deoxyribonucleoside 5'-triphosphate = DNA(n+1) + diphosphate. In terms of biological role, reverse transcriptase (RT) component of antiviral defense system retron Se72, composed of a non-coding RNA (ncRNA), this reverse transcriptase (RT) and the following cold shock-like protein. Expression of retron Se72 confers protection against bacteriophage lambda. At multiplicity of infection (MOI) of 0.02 cultures slow growth when infected with lambda but do not collapse, at MOI 2 cultures enter growth stasis. Responsible for synthesis of msDNA (a branched molecule with RNA linked by a 2',5'-phosphodiester bond to ssDNA). The retron transcript serves as primer (from a conserved internal G residue) and template for the reaction, and codes for the RT. The DNA segment is predicted to be 72 bases long. This chain is Retron Se72 reverse transcriptase, found in Salmonella heidelberg (strain 579083-10).